A 311-amino-acid chain; its full sequence is tRNA(Ile)-lysidine synthase (311 aa).

An ATP-binding site is contributed by 32 to 37 (SGGPDS).

It belongs to the tRNA(Ile)-lysidine synthase family.

It localises to the cytoplasm. It carries out the reaction cytidine(34) in tRNA(Ile2) + L-lysine + ATP = lysidine(34) in tRNA(Ile2) + AMP + diphosphate + H(+). Functionally, ligates lysine onto the cytidine present at position 34 of the AUA codon-specific tRNA(Ile) that contains the anticodon CAU, in an ATP-dependent manner. Cytidine is converted to lysidine, thus changing the amino acid specificity of the tRNA from methionine to isoleucine. The chain is tRNA(Ile)-lysidine synthase from Cutibacterium acnes (strain DSM 16379 / KPA171202) (Propionibacterium acnes).